The primary structure comprises 508 residues: MLO-like protein 3 (508 aa).

The Extracellular portion of the chain corresponds to 1-21 (MTDKEESNHSSEVGAVRSLQE). Residues 22–42 (TPTWALATVCFFFIAVSICLE) form a helical membrane-spanning segment. At 43 to 68 (RLINLLSTRLKKNRKTSLLEAVEKLK) the chain is on the cytoplasmic side. The helical transmembrane segment at 69-89 (SVLMVLGFMSLMLNVTEGEVS) threads the bilayer. At 90 to 153 (KICIPIKYAN…SEEGLTQLSY (64 aa)) the chain is on the extracellular side. A helical membrane pass occupies residues 154 to 174 (FFFVLACMHILCNLAILLLGM). Topologically, residues 175 to 275 (AKMRKWNSWE…IQRSLHEDFK (101 aa)) are cytoplasmic. A helical membrane pass occupies residues 276–296 (TVVGISPLMWLTVVIFMLLDV). At 297–304 (SGWRVYFY) the chain is on the extracellular side. Residues 305 to 325 (MSFVPLIIVLVIGTKLEMIVA) traverse the membrane as a helical segment. Residues 326–357 (KMAVTIKENNSVIRGTPLVESNDTHFWFSNPR) lie on the Cytoplasmic side of the membrane. Residues 358–378 (FLLSILHYTLFLNTFEMAFIV) form a helical membrane-spanning segment. Residues 379-401 (WITWQFGINSCYHDNQGIIITRL) lie on the Extracellular side of the membrane. Residues 402–422 (VLAVTVQFLSSYITLPLYAIV) form a helical membrane-spanning segment. Residues 423 to 508 (TQMGSSYKRA…EIQIQEKTER (86 aa)) lie on the Cytoplasmic side of the membrane. Residues 436–457 (EQLANVLRHWQGMVRDKKKTIQ) are calmodulin-binding. A disordered region spans residues 453–492 (KKTIQTPDTDNNSNNNNGDIDSGESPVQTEVASEFRFSGR). Serine 494 carries the post-translational modification Phosphoserine.

It belongs to the MLO family.

The protein resides in the membrane. Functionally, may be involved in modulation of pathogen defense and leaf cell death. Activity seems to be regulated by Ca(2+)-dependent calmodulin binding and seems not to require heterotrimeric G proteins. This Arabidopsis thaliana (Mouse-ear cress) protein is MLO-like protein 3 (MLO3).